A 670-amino-acid chain; its full sequence is CLK4-associating serine/arginine rich protein (670 aa).

A Phosphoserine modification is found at serine 101. 2 disordered regions span residues 171–232 and 258–670; these read TVAE…GMAD and EKAM…HYRH. Residues 182–214 show a composition bias toward acidic residues; it reads PEEEESPAEEESNSDEDEVIPDIDVEVDVDELN. Over residues 265-283 the composition is skewed to basic residues; that stretch reads RRSRRQRREFREKRLRGRK. 2 positions are modified to phosphoserine: serine 285 and serine 294. Basic and acidic residues predominate over residues 290–313; it reads ARRDSPTYDPYKRSPSESSSESRS. Position 327 is a phosphothreonine (threonine 327). Phosphoserine is present on residues serine 331 and serine 335. Residues 340–355 are compositionally biased toward low complexity; that stretch reads AAAAAAAAASGAATGK. A compositionally biased stretch (pro residues) spans 356–365; the sequence is PPAPPQPGGP. Residues 378-400 show a composition bias toward low complexity; that stretch reads STSSSSSSASRTSSSRSRSSSSS. 2 stretches are compositionally biased toward basic residues: residues 411-443 and 481-491; these read SGRH…RRHS and RGGRGPRHHSS. A compositionally biased stretch (low complexity) spans 492 to 529; sequence SRSSWSLSPSRSRSLTRSRSPSLSRSRSLSRSRSQSHS. Serine 543 is modified (phosphoserine). Position 569 is a phosphothreonine (threonine 569). The stretch at 581-643 forms a coiled coil; it reads ALNRQFKADK…ERQYSRQSRS (63 aa). 2 stretches are compositionally biased toward basic and acidic residues: residues 586–613 and 621–637; these read FKAD…ELRA and KERE…ERQY. Residues 638-647 are compositionally biased toward low complexity; it reads SRQSRSPSPR. A compositionally biased stretch (basic residues) spans 655–670; it reads SRRRSRSRSRSPHYRH.

It belongs to the splicing factor SR family. In terms of assembly, probably interacts with CLK4. In terms of processing, phosphorylated in vitro by CLK4.

It localises to the nucleus. Functionally, probably functions as an alternative splicing regulator. May regulate the mRNA splicing of genes such as CLK1. May act by regulating members of the CLK kinase family. The polypeptide is CLK4-associating serine/arginine rich protein (CLASRP) (Bos taurus (Bovine)).